We begin with the raw amino-acid sequence, 74 residues long: Peptide BmKa2 (74 aa).

A signal peptide spans 1–24 (MSSKTLLVLLLVGVLVSTFFTADA).

It belongs to the non-disulfide-bridged peptide (NDBP) superfamily. Long chain multifunctional peptide (group 2) family. In terms of tissue distribution, expressed by the venom gland.

The protein resides in the secreted. Its function is as follows. Highly acidic peptide that may have antibacterial activity. This Olivierus martensii (Manchurian scorpion) protein is Peptide BmKa2.